A 782-amino-acid polypeptide reads, in one-letter code: Endonuclease MutS2 (782 aa).

Residue 336 to 343 (GPNTGGKT) coordinates ATP. Positions 707–782 (LDLRGYRYED…GFGVTVATLK (76 aa)) constitute a Smr domain.

The protein belongs to the DNA mismatch repair MutS family. MutS2 subfamily. As to quaternary structure, homodimer. Binds to stalled ribosomes, contacting rRNA.

Functionally, endonuclease that is involved in the suppression of homologous recombination and thus may have a key role in the control of bacterial genetic diversity. Acts as a ribosome collision sensor, splitting the ribosome into its 2 subunits. Detects stalled/collided 70S ribosomes which it binds and splits by an ATP-hydrolysis driven conformational change. Acts upstream of the ribosome quality control system (RQC), a ribosome-associated complex that mediates the extraction of incompletely synthesized nascent chains from stalled ribosomes and their subsequent degradation. Probably generates substrates for RQC. The protein is Endonuclease MutS2 of Staphylococcus aureus (strain Mu50 / ATCC 700699).